The primary structure comprises 393 residues: S-adenosylmethionine sensor upstream of mTORC1 (393 aa).

Positions 1 to 35 are disordered; the sequence is MDLRSSAETDPDLSENHPGSVPAELQSRKQEQEKL. R94 contacts S-adenosyl-L-methionine. Positions 118-141 are disordered; that stretch reads DEKSARHATAGNANTDTNAPPQLS. Residues 125–136 are compositionally biased toward low complexity; it reads ATAGNANTDTNA. S-adenosyl-L-methionine is bound by residues G160, D178, D190, F191, and S232. Residues 362–393 form a disordered region; the sequence is ELPETPYDSDSGESQSSSAPFYELEDPILLQS.

It belongs to the BMT2/SAMTOR family. As to quaternary structure, interacts with the GATOR1 complex; interaction is disrupted when samtor binds S-adenosyl-L-methionine. Interacts with the KICSTOR complex; interaction is disrupted when bmt2/samtor binds S-adenosyl-L-methionine.

Its function is as follows. S-adenosyl-L-methionine-binding protein that acts as an inhibitor of mTORC1 signaling via interaction with the GATOR1 and KICSTOR complexes. Acts as a sensor of S-adenosyl-L-methionine to signal methionine sufficiency to mTORC1: in presence of methionine, binds S-adenosyl-L-methionine, leading to disrupt interaction with the GATOR1 and KICSTOR complexes and promote mTORC1 signaling. Upon methionine starvation, S-adenosyl-L-methionine levels are reduced, thereby promoting the association with GATOR1 and KICSTOR, leading to inhibit mTORC1 signaling. Probably also acts as a S-adenosyl-L-methionine-dependent methyltransferase. In Danio rerio (Zebrafish), this protein is S-adenosylmethionine sensor upstream of mTORC1.